Here is a 141-residue protein sequence, read N- to C-terminus: MALKIRLARGGAKKRPFYRVVIADTRSPRDGRFIEKIGTFNPLLPKDNAERIKVDIERAKHWLSVGALPTDRVARFLDDAGVYTRKARSNPEKSKPKAKAQERLEAARMAEEEAAAAAKAAAEAPAEEAPAAEAPAEEAQA.

The segment at 84–141 is disordered; that stretch reads TRKARSNPEKSKPKAKAQERLEAARMAEEEAAAAAKAAAEAPAEEAPAAEAPAEEAQA. Residues 89–111 are compositionally biased toward basic and acidic residues; that stretch reads SNPEKSKPKAKAQERLEAARMAE. Residues 115–141 are compositionally biased toward low complexity; that stretch reads AAAAKAAAEAPAEEAPAAEAPAEEAQA.

It belongs to the bacterial ribosomal protein bS16 family.

In Parvibaculum lavamentivorans (strain DS-1 / DSM 13023 / NCIMB 13966), this protein is Small ribosomal subunit protein bS16.